A 425-amino-acid polypeptide reads, in one-letter code: Glucose-1-phosphate adenylyltransferase (425 aa).

Alpha-D-glucose 1-phosphate is bound by residues Tyr-114, Gly-179, 194–195, and Ser-212; that span reads EK.

It belongs to the bacterial/plant glucose-1-phosphate adenylyltransferase family. In terms of assembly, homotetramer.

It catalyses the reaction alpha-D-glucose 1-phosphate + ATP + H(+) = ADP-alpha-D-glucose + diphosphate. The protein operates within glycan biosynthesis; glycogen biosynthesis. In terms of biological role, involved in the biosynthesis of ADP-glucose, a building block required for the elongation reactions to produce glycogen. Catalyzes the reaction between ATP and alpha-D-glucose 1-phosphate (G1P) to produce pyrophosphate and ADP-Glc. The chain is Glucose-1-phosphate adenylyltransferase from Pectobacterium carotovorum subsp. carotovorum (strain PC1).